The sequence spans 422 residues: Cysteate synthase (422 aa).

The residue at position 105 (Lys-105) is an N6-(pyridoxal phosphate)lysine. Pyridoxal 5'-phosphate contacts are provided by Asn-131 and Thr-379.

It belongs to the threonine synthase family. Cysteate synthase subfamily. In terms of assembly, homotrimer. Pyridoxal 5'-phosphate is required as a cofactor.

The catalysed reaction is O-phospho-L-serine + sulfite + H(+) = L-cysteate + phosphate. Its pathway is cofactor biosynthesis; coenzyme M biosynthesis. Its function is as follows. Specifically catalyzes the beta-elimination of phosphate from L-phosphoserine and the beta-addition of sulfite to the dehydroalanine intermediate to produce L-cysteate. In Methanospirillum hungatei JF-1 (strain ATCC 27890 / DSM 864 / NBRC 100397 / JF-1), this protein is Cysteate synthase.